Reading from the N-terminus, the 335-residue chain is 3-isopropylmalate dehydrogenase (335 aa).

4 residues coordinate substrate: arginine 87, arginine 97, arginine 121, and aspartate 211. Residues aspartate 211, aspartate 235, and aspartate 239 each contribute to the Mg(2+) site. Residue 271 to 283 participates in NAD(+) binding; it reads GSAPDIAGQSKAD.

The protein belongs to the isocitrate and isopropylmalate dehydrogenases family. LeuB type 2 subfamily. Homodimer. Mg(2+) serves as cofactor. It depends on Mn(2+) as a cofactor.

The protein localises to the cytoplasm. The catalysed reaction is (2R,3S)-3-isopropylmalate + NAD(+) = 4-methyl-2-oxopentanoate + CO2 + NADH. The protein operates within amino-acid biosynthesis; L-leucine biosynthesis; L-leucine from 3-methyl-2-oxobutanoate: step 3/4. Catalyzes the oxidation of 3-carboxy-2-hydroxy-4-methylpentanoate (3-isopropylmalate) to 3-carboxy-4-methyl-2-oxopentanoate. The product decarboxylates to 4-methyl-2 oxopentanoate. This is 3-isopropylmalate dehydrogenase from Nocardia farcinica (strain IFM 10152).